A 98-amino-acid chain; its full sequence is NADH-ubiquinone oxidoreductase chain 4L (98 aa).

3 helical membrane passes run 1–21, 26–46, and 61–81; these read MSLI…GLLM, LMSA…FTTL, and IILL…LVMI.

It belongs to the complex I subunit 4L family. In terms of assembly, core subunit of respiratory chain NADH dehydrogenase (Complex I) which is composed of 45 different subunits.

It is found in the mitochondrion inner membrane. The enzyme catalyses a ubiquinone + NADH + 5 H(+)(in) = a ubiquinol + NAD(+) + 4 H(+)(out). In terms of biological role, core subunit of the mitochondrial membrane respiratory chain NADH dehydrogenase (Complex I) which catalyzes electron transfer from NADH through the respiratory chain, using ubiquinone as an electron acceptor. Part of the enzyme membrane arm which is embedded in the lipid bilayer and involved in proton translocation. The chain is NADH-ubiquinone oxidoreductase chain 4L (MT-ND4L) from Physeter macrocephalus (Sperm whale).